Consider the following 332-residue polypeptide: RING-H2 finger protein ATL81 (332 aa).

Positions 1-19 (MYDLTFLLISLFPIDITLP) are cleaved as a signal peptide. The chain crosses the membrane as a helical span at residues 76 to 96 (IVLTGSLLFIIFTGFFSFFFC). The segment at 154-196 (CSICLTEFMDDDTIRLISTCNHSFHTICIDLWFEGHKTCPVCR) adopts an RING-type; atypical zinc-finger fold.

This sequence belongs to the RING-type zinc finger family. ATL subfamily.

It localises to the membrane. It carries out the reaction S-ubiquitinyl-[E2 ubiquitin-conjugating enzyme]-L-cysteine + [acceptor protein]-L-lysine = [E2 ubiquitin-conjugating enzyme]-L-cysteine + N(6)-ubiquitinyl-[acceptor protein]-L-lysine.. Its pathway is protein modification; protein ubiquitination. The polypeptide is RING-H2 finger protein ATL81 (ATL81) (Arabidopsis thaliana (Mouse-ear cress)).